Here is an 861-residue protein sequence, read N- to C-terminus: Leucine--tRNA ligase (861 aa).

The 'HIGH' region motif lies at 42 to 52 (PYPSGRIHMGH). The 'KMSKS' region motif lies at 623–627 (KMSKS). Residue K626 coordinates ATP.

This sequence belongs to the class-I aminoacyl-tRNA synthetase family.

The protein resides in the cytoplasm. It catalyses the reaction tRNA(Leu) + L-leucine + ATP = L-leucyl-tRNA(Leu) + AMP + diphosphate. The polypeptide is Leucine--tRNA ligase (Caulobacter sp. (strain K31)).